A 314-amino-acid chain; its full sequence is MTITLPIGLSVTARVPASSANLGPGFDTLGLALGLYDEIVVTTTDSGLQIRVEGEGAADVPWGPSHLVVRAIERGLEAAGVWASGLDVLCRNAIPHSRGLGSSASAAVGGLAAANGLARALDAEIGLTEEQLVQLSSEFEGHPDNASASVLGGAVVSWSCPPAVEGDEPIYSAAKLDVHPDIRAVALVPEERSSTAHTRGLLPELVPHQDASFNASRSALAVVALTARPDLLMAATEDRLHQAQRAPALPLTTRWIGILREAGIAATVSGAGPTVLALSTEPFPVELAEAARADGLRVLELDIADGVEVSTTTV.

95-105 (PHSRGLGSSAS) provides a ligand contact to ATP.

It belongs to the GHMP kinase family. Homoserine kinase subfamily.

The protein resides in the cytoplasm. The catalysed reaction is L-homoserine + ATP = O-phospho-L-homoserine + ADP + H(+). Its pathway is amino-acid biosynthesis; L-threonine biosynthesis; L-threonine from L-aspartate: step 4/5. In terms of biological role, catalyzes the ATP-dependent phosphorylation of L-homoserine to L-homoserine phosphate. This chain is Homoserine kinase, found in Rhodococcus erythropolis (strain PR4 / NBRC 100887).